The sequence spans 519 residues: MSKFHKTISRRDFMKGLGLAGAGIGAVAASAPVFHDIDELVSSEANSTKDQPWYVKHREHFDPTITVDWDIFDRYDGYQHKGVYEGPPDAPFTSWGNRLQVRMSGEEQKKRILAAKKERFPGWDGGLHGRGDQRADALFYAVTQPFPGSGEEGHGLFQPYPDQPGKFYARWGLYGPPHDSAPPDGSVPKWEGTPEDNFLMLRAAAKYFGAGGVGALNLADPKCKKLIYKKAQPMTLGKGTYSEIGGPGMIDAKIYPKVPDHAVPINFKEADYSYYNDAEWVIPTKCESIFTFTLPQPQELNKRTGGIAGAGSYTVYKDFARVGTLVQMFIKYLGYHALYWPIGWGPGGCFTTFDGQGEQGRTGAAIHWKFGSSQRGSERVITDLPIAPTPPIDAGMFEFCKTCYICRDVCVSGGVHQEDEPTWDSGNWWNVQGYLGYRTDWSGCHNQCGMCQSSCPFTYLGLENASLVHKIVKGVVANTTVFNSFFTNMEKALGYGDLTMENSNWWKEEGPIYGFDPGT.

A signal peptide (tat-type signal) is located at residues 1–43 (MSKFHKTISRRDFMKGLGLAGAGIGAVAASAPVFHDIDELVSS). 4Fe-4S ferredoxin-type domains lie at 388 to 420 (PTPPIDAGMFEFCKTCYICRDVCVSGGVHQEDE) and 435 to 465 (LGYRTDWSGCHNQCGMCQSSCPFTYLGLENA). The [4Fe-4S] cluster site is built by Cys400, Cys403, Cys406, Cys410, Cys444, Cys448, Cys451, and Cys455.

The protein belongs to the PceA family. It depends on [4Fe-4S] cluster as a cofactor. Requires corrinoid as cofactor. In terms of processing, predicted to be exported by the Tat system. The position of the signal peptide cleavage has been experimentally proven.

The protein localises to the cell membrane. It carries out the reaction chloroethene + AH2 = ethene + chloride + A + H(+). The catalysed reaction is (Z)-1,2-dichloroethene + AH2 = chloroethene + chloride + A + H(+). The enzyme catalyses 1,1-dichloroethene + AH2 = chloroethene + chloride + A + H(+). Functionally, catalyzes the reductive dechlorination of chloroethene (or vinyl chloride, VC) to ethene. Can also reduce all dichloroethene (DCE) isomers, but not tetrachloroethene (PCE) or trichloroethene (TCE), at high rates. Reduced methyl viologen can act as the artificial electron donor. In Dehalococcoides mccartyi (strain VS), this protein is Chloroethene reductive dehalogenase.